A 719-amino-acid chain; its full sequence is Fatty acid oxidation complex subunit alpha (719 aa).

The enoyl-CoA hydratase/isomerase stretch occupies residues 1–190; that stretch reads MVYQGNRITV…KLGLVDATVA (190 aa). Asp298 contributes to the substrate binding site. The 3-hydroxyacyl-CoA dehydrogenase stretch occupies residues 313-719; that stretch reads HDINEAAVLG…AAGETFYATA (407 aa). Residues Met326, Asp345, 402–404, Lys409, and Ser431 each bind NAD(+); that span reads VVE. His452 serves as the catalytic For 3-hydroxyacyl-CoA dehydrogenase activity. An NAD(+)-binding site is contributed by Asn455. Position 502 (Asn502) interacts with substrate.

This sequence in the N-terminal section; belongs to the enoyl-CoA hydratase/isomerase family. In the C-terminal section; belongs to the 3-hydroxyacyl-CoA dehydrogenase family. Heterotetramer of two alpha chains (FadB) and two beta chains (FadA).

The enzyme catalyses a (3S)-3-hydroxyacyl-CoA + NAD(+) = a 3-oxoacyl-CoA + NADH + H(+). It catalyses the reaction a (3S)-3-hydroxyacyl-CoA = a (2E)-enoyl-CoA + H2O. The catalysed reaction is a 4-saturated-(3S)-3-hydroxyacyl-CoA = a (3E)-enoyl-CoA + H2O. It carries out the reaction (3S)-3-hydroxybutanoyl-CoA = (3R)-3-hydroxybutanoyl-CoA. The enzyme catalyses a (3Z)-enoyl-CoA = a 4-saturated (2E)-enoyl-CoA. It catalyses the reaction a (3E)-enoyl-CoA = a 4-saturated (2E)-enoyl-CoA. The protein operates within lipid metabolism; fatty acid beta-oxidation. Involved in the aerobic and anaerobic degradation of long-chain fatty acids via beta-oxidation cycle. Catalyzes the formation of 3-oxoacyl-CoA from enoyl-CoA via L-3-hydroxyacyl-CoA. It can also use D-3-hydroxyacyl-CoA and cis-3-enoyl-CoA as substrate. The protein is Fatty acid oxidation complex subunit alpha of Psychrobacter cryohalolentis (strain ATCC BAA-1226 / DSM 17306 / VKM B-2378 / K5).